A 39-amino-acid polypeptide reads, in one-letter code: Potassium channel toxin alpha-KTx 2.2 (39 aa).

3 cysteine pairs are disulfide-bonded: cysteine 7-cysteine 29, cysteine 13-cysteine 34, and cysteine 17-cysteine 36. The interaction with Kv1.3 channels stretch occupies residues 37 to 39 (YPH).

This sequence belongs to the short scorpion toxin superfamily. Potassium channel inhibitor family. Alpha-KTx 02 subfamily. In terms of tissue distribution, expressed by the venom gland.

It is found in the secreted. In terms of biological role, potent inhibitor of voltage-gated potassium channels such as Kv1.1/KCNA1 (IC(50)=0.144 nM), Kv1.2/KCNA2 (IC(50)=0.675 nM), Kv1.3/KCNA3 (IC(50)=0.23 nM) and Shaker (Kd=160 nM). Suppresses expression of the Kv1.3/KCNA3 channel in lipopolysaccharide (LPS)-stimulated mouse macrophages. Down-regulates secretion of nitric oxide (NO) and inflammatory cytokines, such as TNF-alpha/TNF, IL-1beta/IL1B and IL6, in LPS-stimulated mouse macrophages in a manner dependent on Kv1.3/KCNA3 channel blockage. Reduces activation of MAPK and NF-kappa-B signaling pathways in LPS-stimulated mouse macrophages. Modulates intracellular Ca(2+) signaling in human PMA/ionomycin-triggered T-cells. Interferes with the activation of the MAPK, NF-kappa-B and NFATc1 pathways in human PMA/ionomycin-triggered T-cells. Reduces proliferation of human PMA/ionomycin-triggered T-cells. Down-regulates secretion of cytokines, such as TNF-alpha/TNF and IL2, in human PMA/ionomycin-triggered T-cells. In Centruroides margaritatus (Central American bark Scorpion), this protein is Potassium channel toxin alpha-KTx 2.2.